A 354-amino-acid polypeptide reads, in one-letter code: S-adenosylmethionine:tRNA ribosyltransferase-isomerase (354 aa).

Belongs to the QueA family. As to quaternary structure, monomer.

Its subcellular location is the cytoplasm. It catalyses the reaction 7-aminomethyl-7-carbaguanosine(34) in tRNA + S-adenosyl-L-methionine = epoxyqueuosine(34) in tRNA + adenine + L-methionine + 2 H(+). Its pathway is tRNA modification; tRNA-queuosine biosynthesis. Functionally, transfers and isomerizes the ribose moiety from AdoMet to the 7-aminomethyl group of 7-deazaguanine (preQ1-tRNA) to give epoxyqueuosine (oQ-tRNA). This is S-adenosylmethionine:tRNA ribosyltransferase-isomerase from Salmonella typhi.